The following is a 99-amino-acid chain: uncharacterized protein (99 aa).

Disordered regions lie at residues 1–24 (MKATRRTRVASERGVRRRRRVRAT) and 49–99 (SVRT…RCAT). 2 stretches are compositionally biased toward basic residues: residues 15-24 (VRRRRRVRAT) and 71-81 (SRRRGRPRSSR).

This is an uncharacterized protein from Streptomyces fradiae (Streptomyces roseoflavus).